We begin with the raw amino-acid sequence, 2497 residues long: Integrator complex subunit 1 homolog (2497 aa).

Residues 1 to 10 (MMLNKIKRSK) are compositionally biased toward basic residues. Disordered stretches follow at residues 1 to 151 (MMLN…NNNI), 300 to 337 (QPQPPQQQQTKQPVNIKTQPQQQQQQQQQPQPQQIKKS), 946 to 965 (QQQQQQLQTPQQQQQQQQPT), 1028 to 1108 (TTTT…TSSS), 1234 to 1292 (INNN…NQKS), and 1572 to 1604 (NNNNNNNNNNNNNNNNNNNNNNNNNNNNNNNIT). Composition is skewed to low complexity over residues 37 to 46 (SDNNNNNSND), 60 to 151 (NNSI…NNNI), 305 to 333 (QQQQTKQPVNIKTQPQQQQQQQQQPQPQQ), 946 to 963 (QQQQQQLQTPQQQQQQQQ), and 1028 to 1058 (TTTTTSSTTTTTTTTTSTTTSTSTSSSSSSL). Residues 1075–1091 (SGLSGSSNGINQSSDSI) are compositionally biased toward polar residues. Composition is skewed to low complexity over residues 1097-1108 (STSPTTTTTSSS), 1234-1265 (INNNDNNNNNNNNNNNNNNNNNNNNNDNNINK), 1272-1289 (HSNSMANNNLPNNNNKNN), and 1572-1602 (NNNNNNNNNNNNNNNNNNNNNNNNNNNNNNN). The stretch at 1645-1675 (RILKNTTQQKQQKQQQKESVQKSIQSLSKLI) forms a coiled coil. The segment covering 2084–2115 (QQQQQQQQQQQQQQKQQSNNSNNINNNNNNNN) has biased composition (low complexity). Disordered regions lie at residues 2084 to 2123 (QQQQQQQQQQQQQQKQQSNNSNNINNNNNNNNSEKKQKSK) and 2329 to 2350 (NNNNNNNNNNNNNNNNNNNNNN).

It belongs to the Integrator subunit 1 family. In terms of assembly, component of the Integrator complex. The core complex associates with protein phosphatase 2A subunits to form the Integrator-PP2A (INTAC) complex.

Its subcellular location is the nucleus. Functionally, component of the integrator complex, a multiprotein complex that terminates RNA polymerase II (Pol II) transcription in the promoter-proximal region of genes. The integrator complex provides a quality checkpoint during transcription elongation by driving premature transcription termination of transcripts that are unfavorably configured for transcriptional elongation: the complex terminates transcription by (1) catalyzing dephosphorylation of the C-terminal domain (CTD) of Pol II subunit polr2a, (2) degrading the exiting nascent RNA transcript via endonuclease activity and (3) promoting the release of Pol II from bound DNA. The integrator complex is also involved in terminating the synthesis of non-coding Pol II transcripts, such as enhancer RNAs (eRNAs), small nuclear RNAs (snRNAs), telomerase RNAs and long non-coding RNAs (lncRNAs). The chain is Integrator complex subunit 1 homolog (ints1) from Dictyostelium discoideum (Social amoeba).